A 767-amino-acid polypeptide reads, in one-letter code: Syn-copalyl diphosphate synthase, chloroplastic (767 aa).

A chloroplast-targeting transit peptide spans 1–47; it reads MPVFTASFQCVTLFGQPASAADAQPLLQGQRPFLHLHARRRRPCGPM. A disordered region spans residues 45–74; that stretch reads GPMLISKSPPYPASEETREWEADGQHEHTD. Residues 59 to 74 are compositionally biased toward basic and acidic residues; it reads EETREWEADGQHEHTD. Lys-233 lines the substrate pocket. Positions 365 and 367 each coordinate Mg(2+). The DXDD motif signature appears at 365-368; sequence DIDD. Residue Lys-453 coordinates substrate.

Belongs to the terpene synthase family. Requires Mg(2+) as cofactor.

It localises to the plastid. It is found in the chloroplast. It catalyses the reaction (2E,6E,10E)-geranylgeranyl diphosphate = 9alpha-copalyl diphosphate. Functionally, catalyzes the conversion of geranylgeranyl diphosphate to the phytoalexin precursor syn-copalyl diphosphate. Required for the biosynthesis of momilactones that exude from roots and act as allelochemicals against lowland weeds in paddy soil. The sequence is that of Syn-copalyl diphosphate synthase, chloroplastic from Oryza sativa subsp. japonica (Rice).